The chain runs to 478 residues: Cell division protein FtsZ homolog 2-1, chloroplastic (478 aa).

The disordered stretch occupies residues 86–112; that stretch reads EGTSTIVNPRKETSSGPVVEDFEEPSA. 128–132 contacts GTP; the sequence is GGGSN. Serine 143 bears the Phosphoserine; by PGK1 mark. GTP contacts are provided by residues 217–219, glutamate 248, and arginine 252; that span reads GTG. Position 286 is a phosphothreonine; by PGK1 (threonine 286). Aspartate 296 provides a ligand contact to GTP.

Belongs to the FtsZ family. In terms of assembly, aggregates to form a contractile ring-like structure; contraction of the ring was accompanied by an increase in the filament turnover rate. Self-interacts and binds to FTSZ1 in heteromers to form two morphologically distinct types of filaments, termed type-I (smooth filaments) and -II (rough filaments), in a GTP-dependent manner; the GDP-induced disassembly is inhibited by ARC6. Interacts (via C-terminus) with ARC6; this interaction enables ARC3 binding to FTSZ2. Part of a complex made of ARC3, ARC6, FTSZ1 and FTSZ2. Binds to MCD1 in an ARC6-dependent manner. Binds to CDP1/PARC6. Part of a complex made of CDP1/PARC6, ARC3 and FtsZ proteins in the middle of the plastid; this complex enhances the dynamics of Z rings during chloroplast division. Binds to PGK1. Filaments containing FTSZ2-1 are stabilized when in complex with GTP but destabilized after conversion of GTP into GDP; ARC6 conteracts this destabilisation by preventing the dissociation of GDP-bound FTSZ2 molecules thus inhibiting filament disassembly whereas ARC3 promotes GTPase activity thus accelerating the conversion of GTP into GDP and triggering FtsZ2 filaments disassembly. In terms of processing, phosphorylation at Ser-143 is necessary for interactions with ARC3, ARC6, FTSZ1 and FTSZ2-2. Phosphorylations at Ser-143 and Thr-286 are required for the formation of contractile ring at the chloroplast midpoint.

Its subcellular location is the plastid. It is found in the chloroplast stroma. The protein resides in the chloroplast thylakoid membrane. Its activity is regulated as follows. GTPase activity is enhanced by ARC3. Exhibits GTPase activity which converts GTP ligands to GDP. Component of the plastid division machinery consisting in a binary fission accomplished by the simultaneous constriction of the FtsZ ring on the stromal side of the inner envelope membrane, and the ARC5 ring on the cytosolic side of the outer envelope membrane. Required for plastid division in a dose-dependent manner. In the vegetative shoot apex, at the shoot apical meristem (SAM), where the proplastid-to-chloroplast transition takes place, major contributor of plastid division in the L1 and L3 layers and contributes equally with FTSZ1 in the L2 layer. This chain is Cell division protein FtsZ homolog 2-1, chloroplastic, found in Arabidopsis thaliana (Mouse-ear cress).